The primary structure comprises 953 residues: Coatomer subunit beta (953 aa).

Thr-2 bears the N-acetylthreonine mark. 6 HEAT repeats span residues 96–131 (HEMILVCDAYRKDLQHPNEFIRGSTLRFLCKLKEAE), 132–168 (LLEPLMPAIRACLEHRHSYVRRNAVLAIYTIYRNFEH), 240–276 (SERARFIRCIYNLLQSSSPAVKYEAAGTLVTLSSAPT), 277–314 (AIKAAAQCYIDLIIKESDNNVKLIVLDRLIELKEHPAH), 316–353 (RVLQDLVMDILRVLSTPDLEVRKKTLQLALDLVSSRNV), and 396–433 (DMAANVIPVLMEFLSDSNEAAAADVLEFVREAIQRFDN). An N6-acetyllysine modification is found at Lys-494.

In terms of assembly, oligomeric complex that consists of at least the alpha, beta, beta', gamma, delta, epsilon and zeta subunits. Interacts with CAPN8 and PRKCE. Interacts with SCYL1. Interacts with COPG1. Interacts with ARF1 (myristoylated); this interaction is required for binding of COPB1 to Golgi membranes. Interacts (via trunk domain) with ARF1 (via switch I region); the interaction is direct. Interacts with KCNK2 (via N-terminus); this interaction increases the channel-mediated whole cell currents and promotes plasma membrane expression of KCNK2. Interacts with STX17. Interacts with TMEM115. Interacts with TMEM41B. As to expression, high expression in the lung, kidney, skeletal muscle and small intestine, and lower level of expression in heart, liver, spleen, stomach and fat.

The protein resides in the cytoplasm. It localises to the golgi apparatus membrane. The protein localises to the cytoplasmic vesicle. Its subcellular location is the COPI-coated vesicle membrane. It is found in the cell membrane. The protein resides in the endoplasmic reticulum-Golgi intermediate compartment. The coatomer is a cytosolic protein complex that binds to dilysine motifs and reversibly associates with Golgi non-clathrin-coated vesicles, which further mediate biosynthetic protein transport from the ER, via the Golgi up to the trans Golgi network. Coatomer complex is required for budding from Golgi membranes, and is essential for the retrograde Golgi-to-ER transport of dilysine-tagged proteins. In mammals, the coatomer can only be recruited by membranes associated to ADP-ribosylation factors (ARFs), which are small GTP-binding proteins; the complex also influences the Golgi structural integrity, as well as the processing, activity, and endocytic recycling of LDL receptors. Plays a functional role in facilitating the transport of kappa-type opioid receptor mRNAs into axons and enhances translation of these proteins. Required for limiting lipid storage in lipid droplets. Involved in lipid homeostasis by regulating the presence of perilipin family members PLIN2 and PLIN3 at the lipid droplet surface and promoting the association of adipocyte surface triglyceride lipase (PNPLA2) with the lipid droplet to mediate lipolysis. Involved in the Golgi disassembly and reassembly processes during cell cycle. Involved in autophagy by playing a role in early endosome function. Plays a role in organellar compartmentalization of secretory compartments including endoplasmic reticulum (ER)-Golgi intermediate compartment (ERGIC), Golgi, trans-Golgi network (TGN) and recycling endosomes, and in biosynthetic transport of CAV1. The polypeptide is Coatomer subunit beta (Sus scrofa (Pig)).